The following is a 135-amino-acid chain: UPF0355 protein MRSA252 (135 aa).

It belongs to the UPF0355 family.

This is UPF0355 protein MRSA252 from Staphylococcus aureus (strain MRSA252).